The sequence spans 89 residues: uncharacterized protein (89 aa).

It to B.licheniformis xpaF1 and to B.subtilis XhlA.

This is an uncharacterized protein from Bacillus licheniformis.